Reading from the N-terminus, the 273-residue chain is HMP-PP phosphatase (273 aa).

D8 functions as the Nucleophile in the catalytic mechanism. 3 residues coordinate Mg(2+): D8, D10, and D212.

The protein belongs to the HAD-like hydrolase superfamily. Cof family. It depends on Mg(2+) as a cofactor.

The catalysed reaction is 4-amino-2-methyl-5-(diphosphooxymethyl)pyrimidine + H2O = 4-amino-2-methyl-5-(phosphooxymethyl)pyrimidine + phosphate + H(+). In terms of biological role, catalyzes the hydrolysis of 4-amino-2-methyl-5-hydroxymethylpyrimidine pyrophosphate (HMP-PP) to 4-amino-2-methyl-5-hydroxymethylpyrimidine phosphate (HMP-P). This chain is HMP-PP phosphatase, found in Yersinia pseudotuberculosis serotype O:1b (strain IP 31758).